The sequence spans 318 residues: Olfactory receptor 2T3 (318 aa).

The Extracellular portion of the chain corresponds to methionine 1–alanine 30. 2 N-linked (GlcNAc...) asparagine glycosylation sites follow: asparagine 5 and asparagine 10. A helical transmembrane segment spans residues leucine 31–isoleucine 54. The Cytoplasmic segment spans residues histidine 55–threonine 62. The chain crosses the membrane as a helical span at residues proline 63 to proline 84. At lysine 85 to glutamine 105 the chain is on the extracellular side. Residues cysteine 102 and cysteine 194 are joined by a disulfide bond. The chain crosses the membrane as a helical span at residues methionine 106–tyrosine 125. Residues aspartate 126–arginine 144 lie on the Cytoplasmic side of the membrane. The helical transmembrane segment at valine 145 to leucine 163 threads the bilayer. The Extracellular portion of the chain corresponds to leucine 164–tyrosine 200. A helical transmembrane segment spans residues lysine 201–threonine 224. Topologically, residues leucine 225–lysine 241 are cytoplasmic. A helical membrane pass occupies residues alanine 242–tyrosine 264. Topologically, residues methionine 265–methionine 277 are extracellular. The chain crosses the membrane as a helical span at residues methionine 278–leucine 297. Residues arginine 298–lysine 318 are Cytoplasmic-facing.

It belongs to the G-protein coupled receptor 1 family.

The protein localises to the cell membrane. Its function is as follows. Odorant receptor. This Homo sapiens (Human) protein is Olfactory receptor 2T3 (OR2T3).